The sequence spans 391 residues: Putative 1-acyl-sn-glycerol-3-phosphate acyltransferase acl-12 (391 aa).

The next 2 membrane-spanning stretches (helical) occupy residues 47–67 (FFFM…SLLF) and 84–104 (LCAM…ATVT). The HXXXXD motif signature appears at 124 to 129 (HLGLLD).

Belongs to the 1-acyl-sn-glycerol-3-phosphate acyltransferase family.

The protein localises to the membrane. The catalysed reaction is a 1-acyl-sn-glycero-3-phosphate + an acyl-CoA = a 1,2-diacyl-sn-glycero-3-phosphate + CoA. It participates in phospholipid metabolism; CDP-diacylglycerol biosynthesis; CDP-diacylglycerol from sn-glycerol 3-phosphate: step 2/3. Functionally, converts lysophosphatidic acid (LPA) into phosphatidic acid by incorporating an acyl moiety at the sn-2 position of the glycerol backbone. The protein is Putative 1-acyl-sn-glycerol-3-phosphate acyltransferase acl-12 (acl-12) of Caenorhabditis elegans.